A 251-amino-acid polypeptide reads, in one-letter code: 5'-nucleotidase SurE (251 aa).

A divalent metal cation-binding residues include aspartate 8, aspartate 9, serine 39, and asparagine 95.

The protein belongs to the SurE nucleotidase family. A divalent metal cation serves as cofactor.

Its subcellular location is the cytoplasm. It carries out the reaction a ribonucleoside 5'-phosphate + H2O = a ribonucleoside + phosphate. Its function is as follows. Nucleotidase that shows phosphatase activity on nucleoside 5'-monophosphates. The protein is 5'-nucleotidase SurE of Ralstonia nicotianae (strain ATCC BAA-1114 / GMI1000) (Ralstonia solanacearum).